A 342-amino-acid chain; its full sequence is Large ribosomal subunit protein uL3 (342 aa).

This sequence belongs to the universal ribosomal protein uL3 family. Part of the 50S ribosomal subunit. Forms a cluster with proteins L14 and L24e.

One of the primary rRNA binding proteins, it binds directly near the 3'-end of the 23S rRNA, where it nucleates assembly of the 50S subunit. This chain is Large ribosomal subunit protein uL3, found in Pyrobaculum islandicum (strain DSM 4184 / JCM 9189 / GEO3).